A 369-amino-acid chain; its full sequence is Porin-like protein BUsg_347 (369 aa).

A signal peptide spans 1-23; sequence MKNHKSLAILIPMLFAGSTAVNA.

It belongs to the Gram-negative porin family. As to quaternary structure, homotrimer.

The protein localises to the cell outer membrane. Forms pores that allow passive diffusion of small molecules across the membrane. This Buchnera aphidicola subsp. Schizaphis graminum (strain Sg) protein is Porin-like protein BUsg_347.